A 402-amino-acid polypeptide reads, in one-letter code: Mitochondrial inner membrane protein OXA1 (402 aa).

The N-terminal 42 residues, 1-42 (MFKLTSRLVTSRFAASSRLATARTIVLPRPHPSWISFQAKRF), are a transit peptide targeting the mitochondrion. Residues 43–118 (NSTGPNANDV…PSDIIQHVLE (76 aa)) lie on the Mitochondrial intermembrane side of the membrane. Residues 119–139 (AVHVYSGLPWWGTIAATTILI) form a helical membrane-spanning segment. Residues 140-199 (RCLMFPLYVKSSDTVARNSHIKPELDALNNKLMSTTDLQQGQLVAMQRKKLLSSHGIKNR) lie on the Mitochondrial matrix side of the membrane. The helical transmembrane segment at 200–220 (WLAAPMLQIPIALGFFNALRH) threads the bilayer. Residues 221 to 239 (MANYPVDGFANQGVAWFTD) lie on the Mitochondrial intermembrane side of the membrane. Residues 240–260 (LTQADPYLGLQVITAAVFISF) form a helical membrane-spanning segment. Topologically, residues 261–275 (TRLGGETGAQQFSSP) are mitochondrial matrix. A helical transmembrane segment spans residues 276 to 292 (MKRLFTILPIISIPATM). At 293 to 297 (NLSSA) the chain is on the mitochondrial intermembrane side. A helical transmembrane segment spans residues 298 to 316 (VVLYFAFNGAFSVLQTMIL). Residues 317–402 (RNKWVRSKLK…HKSNFINNKK (86 aa)) lie on the Mitochondrial matrix side of the membrane. Positions 366 to 385 (RQLMQDNEKKLQESFKEKRQ) are enriched in basic and acidic residues. Residues 366-386 (RQLMQDNEKKLQESFKEKRQN) form a disordered region.

This sequence belongs to the OXA1/ALB3/YidC family. Interacts with the large ribosome subunit of mitochondrial ribosome. Interacts directly with MRP20. Interacts with OXA1.

It localises to the mitochondrion inner membrane. Its function is as follows. Mitochondrial inner membrane insertase that mediates the insertion of both mitochondrion-encoded precursors and nuclear-encoded proteins from the matrix into the inner membrane. Links mitoribosomes with the inner membrane. Forms pores capable of accommodating translocating protein segments. Essential for the activity and assembly of cytochrome c oxidase. Plays a central role in the translocation and export of the N-terminal part of the COX2 protein into the mitochondrial intermembrane space. The chain is Mitochondrial inner membrane protein OXA1 from Saccharomyces cerevisiae (strain ATCC 204508 / S288c) (Baker's yeast).